Consider the following 84-residue polypeptide: Beta-cardiotoxin CTX9 (84 aa).

The first 21 residues, 1–21, serve as a signal peptide directing secretion; that stretch reads MKTLLLTLVVVTIVCLDLGYT. Intrachain disulfides connect cysteine 24–cysteine 43, cysteine 36–cysteine 61, cysteine 65–cysteine 76, and cysteine 77–cysteine 82.

This sequence belongs to the three-finger toxin family. Short-chain subfamily. Aminergic toxin sub-subfamily. Expressed by the venom gland.

The protein resides in the secreted. Acts as a beta-blocker by binding to beta-1 and beta-2 adrenergic receptors (ADRB1 and ADRB2). It dose-dependently decreases the heart rate (bradycardia), whereas conventional cardiotoxins increases it. At 100 mg/kg, intraperitoneal injection into mice provokes labored breathing, impaired locomotion, lack of response to external stimuli, and death (after 30 minutes). This chain is Beta-cardiotoxin CTX9, found in Ophiophagus hannah (King cobra).